Reading from the N-terminus, the 312-residue chain is RNA pseudouridylate synthase domain-containing protein 1 (312 aa).

Met-1 carries the post-translational modification N-acetylmethionine. Asp-67 is a catalytic residue. Positions 256–298 (ATPDPDPEDRGPRPGSPSALLPGPGRPPPPPTKPPETEAQRGP) are disordered. The segment covering 279-289 (PGRPPPPPTKP) has biased composition (pro residues).

Belongs to the pseudouridine synthase RluA family.

This is RNA pseudouridylate synthase domain-containing protein 1 (RPUSD1) from Homo sapiens (Human).